Reading from the N-terminus, the 544-residue chain is Chaperonin GroEL 1 (544 aa).

Residues 29–32, 86–90, glycine 413, 479–481, and aspartate 495 contribute to the ATP site; these read TLGP, DGTTT, and NAA.

It belongs to the chaperonin (HSP60) family. As to quaternary structure, forms a cylinder of 14 subunits composed of two heptameric rings stacked back-to-back. Interacts with the co-chaperonin GroES.

The protein localises to the cytoplasm. It carries out the reaction ATP + H2O + a folded polypeptide = ADP + phosphate + an unfolded polypeptide.. In terms of biological role, together with its co-chaperonin GroES, plays an essential role in assisting protein folding. The GroEL-GroES system forms a nano-cage that allows encapsulation of the non-native substrate proteins and provides a physical environment optimized to promote and accelerate protein folding. This chain is Chaperonin GroEL 1, found in Synechococcus sp. (strain CC9902).